Here is a 124-residue protein sequence, read N- to C-terminus: V-type proton ATPase subunit F (124 aa).

It belongs to the V-ATPase F subunit family. As to quaternary structure, V-ATPase is a heteromultimeric enzyme composed of a peripheral catalytic V1 complex (components A to H) attached to an integral membrane V0 proton pore complex (components: a, c, c', c'', d, e, f and VOA1).

The protein localises to the vacuole membrane. In terms of biological role, subunit of the V1 complex of vacuolar(H+)-ATPase (V-ATPase), a multisubunit enzyme composed of a peripheral complex (V1) that hydrolyzes ATP and a membrane integral complex (V0) that translocates protons. V-ATPase is responsible for acidifying and maintaining the pH of intracellular compartments. This Neurospora crassa (strain ATCC 24698 / 74-OR23-1A / CBS 708.71 / DSM 1257 / FGSC 987) protein is V-type proton ATPase subunit F (vma-7).